Here is a 207-residue protein sequence, read N- to C-terminus: Microtubule-associated protein Jupiter (207 aa).

S30 is modified (phosphoserine). Residues T41 and T102 each carry the phosphothreonine modification. Phosphoserine occurs at positions 111, 138, and 149. 2 disordered regions span residues 129 to 174 (KGKY…YKAG) and 188 to 207 (GNQV…SGLW). Over residues 136-149 (SGSVSSASSSVSSS) the composition is skewed to low complexity. The span at 150–164 (TENLKINVGNRSDGN) shows a compositional bias: polar residues.

This sequence belongs to the MAP Jupiter family.

The protein resides in the nucleus. The protein localises to the cytoplasm. Its subcellular location is the cytoskeleton. It localises to the spindle. Its function is as follows. Binds to all microtubule populations. This is Microtubule-associated protein Jupiter from Drosophila grimshawi (Hawaiian fruit fly).